The chain runs to 458 residues: LysM domain-containing protein ARB_05157 (458 aa).

Positions Met1–Gly19 are cleaved as a signal peptide. The LysM 1 domain maps to Ala157–Val203. The interval Pro210–Pro232 is disordered. A compositionally biased stretch (polar residues) spans Lys212–Ile229. LysM domains lie at Lys245–Val291, Lys325–Val371, and Lys409–Val455.

The protein localises to the secreted. Its function is as follows. Might have a role in sequestration of chitin oligosaccharides (breakdown products of fungal cell walls that are released during invasion and act as triggers of host immunity) to dampen host defense. In Arthroderma benhamiae (strain ATCC MYA-4681 / CBS 112371) (Trichophyton mentagrophytes), this protein is LysM domain-containing protein ARB_05157.